The primary structure comprises 691 residues: DNA-directed RNA polymerase subunit beta' (691 aa).

4 residues coordinate Zn(2+): Cys76, Cys78, Cys94, and Cys97. Residues Asp496, Asp498, and Asp500 each contribute to the Mg(2+) site.

The protein belongs to the RNA polymerase beta' chain family. RpoC1 subfamily. Mg(2+) serves as cofactor. It depends on Zn(2+) as a cofactor.

It is found in the plastid. The enzyme catalyses RNA(n) + a ribonucleoside 5'-triphosphate = RNA(n+1) + diphosphate. Functionally, DNA-dependent RNA polymerase catalyzes the transcription of DNA into RNA using the four ribonucleoside triphosphates as substrates. This chain is DNA-directed RNA polymerase subunit beta', found in Cuscuta exaltata (Tall dodder).